The chain runs to 1388 residues: MSIPLHSLRFNNTMREENVEPQNKQMAFCRPMTETRADVQILHSHVQLPIVSTSASDPGGTSTQLMTSPVFDTMSAPLMGVPNSGALSPPLMPASDSGALSPLLMPASDSGALSPLLMPALDSGTLSPLLSTSEYGVMSPGMMTIPDFGTMSATLMVAPDSAEISPLAMPAPSSGVVCTPIMSTSSSEAMSTPLMLAPDSGELSPILMQDMNPGVMSTQPVPAPSSEAMSPLQITDEDTEAMSKVLMTALASGEISSLLMSGTDSEAISSLIMSAVASGGTSPQPTSTQNSGGIPTPLMSDLDSGIMSSLLMSSPGSEVMSTPLLSVPDAGEMSTLPKPAPDAEAMSPALMTALPSGVMPTQTMPAPGSGAMSPWSTQNVDSEMMSNPPVRATASGVMSAPPVRALDSGAMSTPLMGAPASGNMSTLQKTVPASGAMTTSLMTVPSSGVMSTEQMSATASRVMSAQLTMAKTSGAMPTGSMKAVAKQYKRATASGKMSTPLRRAPTSGAMSTQPVTATASETMSMPQLTVPASGSMSMLQMRAPVSEAMSMPQMRTMASGLTSAAQMKAMTSGAMSTPLMTAQTSGSTSTLLMRDTASGVMSCPQMRSLASGALSKPLMTPKASGTMFTEKMTTTASEAMPTLLMRDTVSGALSMPQMTDTASGGLSASLMRDTASGAMSTSQMTATVSGGMSMPLMRAQDPGVMPASLMRAKVSGKMLSQPMSTQDPGGMSMSPMKSMTAGGMQMNSPTSDVMSTPTVRAWTSETMSTPLMRTSDPGERPSLLTRASSSGEMSLPLMRAPASGEIATPLRSPAYGAMSAPQMTATASGMMSSMPQVKAPISGAMSMPLTRSTASGGMSMPLMRAPDSRVTSTSQMMPTASGDMCTLPVRAPASGGVSSPLVRAPASGTMSTPLRRPSACETVSTELMRASASGHMSTAQTTAMVSGGMSKPLMRAPASGTMPMPLMSAMASGEMSMPLMETMASGATSTLQTSVANSRSMSLSQTTYTVSGRMATAPIRASASGARSTSFMRASVSGSMPMPLPRATASGCGMGMSMPQMTATDSRGMSTPLMRASGPGTMSTPQTAFGVMSTPEIKATDSGEASTSHINITASGSKPTSHMTATTPETAKPPPKEVPSFGMLTPALCYLLEEQEAARGSCSVEEEMEIDEEKQMKGFLDDSERMAFLVSLHLGAAERWFILQMEVGEPLSHENKSFLRRSQGIYDSLSEIDILSAVLCHPKQGQKSVRQYATDFLLLARHLSWSDAILRTRFLEGLSEAVTTKMGRIFLKVAGSLKELIDRSLYTECQLAEEKDSPGNSSQVLPTACKRNNEEAMGNELSSQQQTEEHQHVSKRCYYLKEHGDPQEGLHDHLGQSTGHHQKAHTNK.

Disordered regions lie at residues 491-511 (ATAS…GAMS), 769-790 (TPLM…ASSS), 895-918 (GGVS…RRPS), 1100-1138 (TDSG…PKEV), and 1336-1388 (AMGN…HTNK). Residues 1103–1123 (GEASTSHINITASGSKPTSHM) are compositionally biased toward polar residues. The span at 1359-1374 (YLKEHGDPQEGLHDHL) shows a compositional bias: basic and acidic residues.

In Homo sapiens (Human), this protein is Retrotransposon Gag-like protein 9.